Reading from the N-terminus, the 114-residue chain is DNA-(apurinic or apyrimidinic site) endonuclease (114 aa).

The protein belongs to the apurinic/apyrimidinic endonuclease family. In terms of assembly, interacts with host Ung; this interaction allows the viral AP endonuclease to localize to newly formed AP sites and cleave them, leading to inhibition of bacterial growth.

Functionally, performs endonucleolytic cleavage at abasic sites, which are generated by the base-excision activity of host Ung. The cleavage generates a 5'-deoxyribose phosphate and 3'-hydroxyl end. The sites are specifically recognized through the formation of a complex with host Ung. The viral endonucleolytic activity damages the host DNA, blocks host DNA replication and induces cell division arrest. This may provide an advantage for the phage and save nucleotides for the viral replication since it specifically targets the host DNA, which possesses more misincorporated uracils than the viral genome. The protein is DNA-(apurinic or apyrimidinic site) endonuclease of Escherichia phage T5 (Enterobacteria phage T5).